A 491-amino-acid polypeptide reads, in one-letter code: Probable cytosol aminopeptidase (491 aa).

Positions 263 and 268 each coordinate Mn(2+). Lysine 275 is a catalytic residue. The Mn(2+) site is built by aspartate 286, aspartate 345, and glutamate 347. The active site involves arginine 349.

This sequence belongs to the peptidase M17 family. Mn(2+) is required as a cofactor.

Its subcellular location is the cytoplasm. It catalyses the reaction Release of an N-terminal amino acid, Xaa-|-Yaa-, in which Xaa is preferably Leu, but may be other amino acids including Pro although not Arg or Lys, and Yaa may be Pro. Amino acid amides and methyl esters are also readily hydrolyzed, but rates on arylamides are exceedingly low.. It carries out the reaction Release of an N-terminal amino acid, preferentially leucine, but not glutamic or aspartic acids.. In terms of biological role, presumably involved in the processing and regular turnover of intracellular proteins. Catalyzes the removal of unsubstituted N-terminal amino acids from various peptides. The chain is Probable cytosol aminopeptidase from Haemophilus influenzae (strain PittGG).